A 365-amino-acid chain; its full sequence is Putrescine carbamoyltransferase (365 aa).

Carbamoyl phosphate is bound by residues 54-58 (STRTR), R105, and H132. Residue 277–280 (HCLP) coordinates putrescine.

It belongs to the aspartate/ornithine carbamoyltransferase superfamily. PTCase family. In terms of assembly, homotrimer.

It localises to the cytoplasm. The catalysed reaction is carbamoyl phosphate + putrescine = N-carbamoylputrescine + phosphate + H(+). It functions in the pathway amine and polyamine biosynthesis; putrescine biosynthesis via agmatine pathway; putrescine from N-carbamoylputrescine (transferase route): step 1/1. Its function is as follows. Catalyzes the phosphorolysis of N-carbamoylputrescine to form carbamoyl phosphate and putrescine. Is involved in the degradation pathway of the polyamine agmatine. The sequence is that of Putrescine carbamoyltransferase from Mycoplasma capricolum subsp. capricolum (strain California kid / ATCC 27343 / NCTC 10154).